The sequence spans 92 residues: PqqA binding protein (92 aa).

The protein belongs to the PqqD family. Monomer. Interacts with PqqE.

It participates in cofactor biosynthesis; pyrroloquinoline quinone biosynthesis. Its function is as follows. Functions as a PqqA binding protein and presents PqqA to PqqE, in the pyrroloquinoline quinone (PQQ) biosynthetic pathway. The sequence is that of PqqA binding protein from Xanthomonas oryzae pv. oryzae (strain MAFF 311018).